A 218-amino-acid chain; its full sequence is Large ribosomal subunit protein uL1 (218 aa).

The protein belongs to the universal ribosomal protein uL1 family. In terms of assembly, part of the 50S ribosomal subunit.

In terms of biological role, probably involved in E site tRNA release. Binds directly to 23S rRNA. Protein L1 is also a translational repressor protein, it controls the translation of its operon by binding to its mRNA. The polypeptide is Large ribosomal subunit protein uL1 (Saccharolobus solfataricus (strain ATCC 35092 / DSM 1617 / JCM 11322 / P2) (Sulfolobus solfataricus)).